The sequence spans 309 residues: UDP-N-acetylenolpyruvoylglucosamine reductase (309 aa).

An FAD-binding PCMH-type domain is found at 33 to 195; sequence VGGQAETLFR…VRARLRTRPG (163 aa). Residue Arg175 is part of the active site. Ser224 serves as the catalytic Proton donor. The active site involves Glu294.

Belongs to the MurB family. It depends on FAD as a cofactor.

It is found in the cytoplasm. The enzyme catalyses UDP-N-acetyl-alpha-D-muramate + NADP(+) = UDP-N-acetyl-3-O-(1-carboxyvinyl)-alpha-D-glucosamine + NADPH + H(+). Its pathway is cell wall biogenesis; peptidoglycan biosynthesis. Functionally, cell wall formation. In Granulibacter bethesdensis (strain ATCC BAA-1260 / CGDNIH1), this protein is UDP-N-acetylenolpyruvoylglucosamine reductase.